We begin with the raw amino-acid sequence, 518 residues long: D-aminopeptidase (518 aa).

Catalysis depends on S62, which acts as the Nucleophile. Residue K65 is the Proton donor/acceptor of the active site. A disordered region spans residues 373-392 (FGTGPEKMDISGENEAQSSM). An important for specificity region spans residues 477 to 487 (QRSMDAPSPGE). D481 is a substrate binding site.

It belongs to the peptidase S12 family. In terms of assembly, homodimer.

It carries out the reaction Release of an N-terminal D-amino acid from a peptide, Xaa-|-Yaa-, in which Xaa is preferably D-Ala, D-Ser or D-Thr. D-amino acid amides and methyl esters also are hydrolyzed, as is glycine amide.. Its activity is regulated as follows. Inhibited by beta-lactam compounds such as 6-aminopenicillic acid, 7-aminocephalosporanic acid, benzylpenicillin and ampicillin. Inhibited by p-chloromercuribenzoate. Hydrolyzes N-terminal residues in D-amino acid-containing peptides. This Brucella melitensis biotype 1 (strain ATCC 23456 / CCUG 17765 / NCTC 10094 / 16M) protein is D-aminopeptidase.